Consider the following 139-residue polypeptide: D-ribose pyranase (139 aa).

The active-site Proton donor is the H20. Residues D28, H106, and Y128–N130 each bind substrate.

This sequence belongs to the RbsD / FucU family. RbsD subfamily. Homodecamer.

The protein localises to the cytoplasm. The enzyme catalyses beta-D-ribopyranose = beta-D-ribofuranose. It functions in the pathway carbohydrate metabolism; D-ribose degradation; D-ribose 5-phosphate from beta-D-ribopyranose: step 1/2. In terms of biological role, catalyzes the interconversion of beta-pyran and beta-furan forms of D-ribose. In Actinobacillus pleuropneumoniae serotype 5b (strain L20), this protein is D-ribose pyranase.